The sequence spans 125 residues: MDPKNLTVEQLAAELTKLQMENSHLKRKLRRSVGGPPKEPPKPRELTEPERQLVLARWHNRFSSRSSELLRRQLDKLTATLVTEEDIDEVLKNADFRLHFRPDPSENPEKKLSKEKRRTARGQQQ.

Residues 5-33 (NLTVEQLAAELTKLQMENSHLKRKLRRSV) adopt a coiled-coil conformation. Disordered regions lie at residues 22-50 (NSHLKRKLRRSVGGPPKEPPKPRELTEPE) and 96-125 (FRLHFRPDPSENPEKKLSKEKRRTARGQQQ). Composition is skewed to basic and acidic residues over residues 39 to 50 (EPPKPRELTEPE) and 96 to 112 (FRLHFRPDPSENPEKKL). Over residues 113 to 125 (SKEKRRTARGQQQ) the composition is skewed to basic residues.

This sequence belongs to the herpesviridae BLRF2 family.

This is an uncharacterized protein from Connochaetes taurinus (Blue wildebeest).